We begin with the raw amino-acid sequence, 365 residues long: Alanine racemase (365 aa).

Lys-32 functions as the Proton acceptor; specific for D-alanine in the catalytic mechanism. At Lys-32 the chain carries N6-(pyridoxal phosphate)lysine. Substrate is bound at residue Arg-128. The Proton acceptor; specific for L-alanine role is filled by Tyr-257. Met-305 contributes to the substrate binding site.

The protein belongs to the alanine racemase family. The cofactor is pyridoxal 5'-phosphate.

It catalyses the reaction L-alanine = D-alanine. The protein operates within amino-acid biosynthesis; D-alanine biosynthesis; D-alanine from L-alanine: step 1/1. In terms of biological role, catalyzes the interconversion of L-alanine and D-alanine. May also act on other amino acids. This is Alanine racemase (alr) from Francisella tularensis subsp. holarctica (strain LVS).